The following is a 171-amino-acid chain: 3-hydroxydecanoyl-[acyl-carrier-protein] dehydratase (171 aa).

His70 is a catalytic residue.

This sequence belongs to the thioester dehydratase family. FabA subfamily. Homodimer.

The protein localises to the cytoplasm. The catalysed reaction is a (3R)-hydroxyacyl-[ACP] = a (2E)-enoyl-[ACP] + H2O. It catalyses the reaction (3R)-hydroxydecanoyl-[ACP] = (2E)-decenoyl-[ACP] + H2O. It carries out the reaction (2E)-decenoyl-[ACP] = (3Z)-decenoyl-[ACP]. It functions in the pathway lipid metabolism; fatty acid biosynthesis. Its function is as follows. Necessary for the introduction of cis unsaturation into fatty acids. Catalyzes the dehydration of (3R)-3-hydroxydecanoyl-ACP to E-(2)-decenoyl-ACP and then its isomerization to Z-(3)-decenoyl-ACP. Can catalyze the dehydratase reaction for beta-hydroxyacyl-ACPs with saturated chain lengths up to 16:0, being most active on intermediate chain length. The sequence is that of 3-hydroxydecanoyl-[acyl-carrier-protein] dehydratase from Pseudomonas fluorescens (strain Pf0-1).